Consider the following 371-residue polypeptide: Homeobox protein Nkx-2.1 (371 aa).

Positions 161–220 (RRKRRVLFSQAQVYELERRFKQQKYLSAPEREHLASMIHLTPTQVKIWFQNHRYKMKRQA) form a DNA-binding region, homeobox. 2 disordered regions span residues 219–294 (QAKD…QHQA) and 310–339 (GAGLGAHPGHQPGSAGQSPDLAHHAASPAA). Residues 233–243 (SGGGGGGGGTG) are compositionally biased toward gly residues. The span at 244–253 (CPQQQQAQQQ) shows a compositional bias: low complexity. The residue at position 254 (S254) is a Phosphoserine. Residues 272-294 (AGAPAPGAASLQGHAQQQAQHQA) show a composition bias toward low complexity.

The protein belongs to the NK-2 homeobox family. As to quaternary structure, interacts with WWTR1. Phosphorylated on serine residues by STK3/MST2. As to expression, thyroid and lung.

It localises to the nucleus. Its function is as follows. Transcription factor that binds and activates the promoter of thyroid specific genes such as thyroglobulin, thyroperoxidase, and thyrotropin receptor. Crucial in the maintenance of the thyroid differentiation phenotype. May play a role in lung development and surfactant homeostasis. Forms a regulatory loop with GRHL2 that coordinates lung epithelial cell morphogenesis and differentiation. Activates the transcription of GNRHR and plays a role in enhancing the circadian oscillation of its gene expression. Represses the transcription of the circadian transcriptional repressor NR1D1. This Homo sapiens (Human) protein is Homeobox protein Nkx-2.1.